The chain runs to 126 residues: Holo-[acyl-carrier-protein] synthase (126 aa).

Mg(2+) is bound by residues Asp-9 and Glu-58.

Belongs to the P-Pant transferase superfamily. AcpS family. Requires Mg(2+) as cofactor.

Its subcellular location is the cytoplasm. The catalysed reaction is apo-[ACP] + CoA = holo-[ACP] + adenosine 3',5'-bisphosphate + H(+). In terms of biological role, transfers the 4'-phosphopantetheine moiety from coenzyme A to a Ser of acyl-carrier-protein. This chain is Holo-[acyl-carrier-protein] synthase, found in Salmonella paratyphi B (strain ATCC BAA-1250 / SPB7).